Reading from the N-terminus, the 309-residue chain is Taste receptor type 2 member 20 (309 aa).

Residues 1-6 (MMSFLH) are Extracellular-facing. Residues 7–27 (IVFSILVVVAFILGNFANGFI) form a helical membrane-spanning segment. Residues 28–46 (ALINFIAWVKRQKISSADQ) are Cytoplasmic-facing. A helical transmembrane segment spans residues 47-67 (IIAALAVSRVGLLWVILLHWY). The Extracellular segment spans residues 68 to 79 (STVLNPTSSNLK). Residues 80–100 (VIIFISNAWAVTNHFSIWLAT) traverse the membrane as a helical segment. Residues 101–125 (SLSIFYLLKIVNFSRLIFHHLKRKA) are Cytoplasmic-facing. A helical transmembrane segment spans residues 126–146 (KSVVLVIVLGSLFFLVCHLVM). Over 147–178 (KNTYINVWTEECEGNVTWKIKLRNAMHLSNLT) the chain is Extracellular. Residues 179–199 (VAMLANLIPFTLTLISFLLLI) form a helical membrane-spanning segment. Over 200-229 (YSLCKHLKKMQLHGKGSQDPSTKIHIKALQ) the chain is Cytoplasmic. Residues 230–250 (TVTSFLILLAIYFLCLITSFW) form a helical membrane-spanning segment. Topologically, residues 251-259 (NSKMRPKEI) are extracellular. The helical transmembrane segment at 260–280 (VLMLCQAFGIIYPSFHSFILI) threads the bilayer. The Cytoplasmic segment spans residues 281–309 (WGNKTLKQTFLSVLWQVTCWAKGQNQSTP).

Belongs to the G-protein coupled receptor T2R family.

It is found in the membrane. Functionally, receptor that may play a role in the perception of bitterness and is gustducin-linked. May play a role in sensing the chemical composition of the gastrointestinal content. The activity of this receptor may stimulate alpha gustducin, mediate PLC-beta-2 activation and lead to the gating of TRPM5. This chain is Taste receptor type 2 member 20 (TAS2R20), found in Pan paniscus (Pygmy chimpanzee).